A 79-amino-acid polypeptide reads, in one-letter code: MDTKQGVLDILNDLTGEDLSDQMDENIFDNGLMDSMASVQMLLSLQEKFDIDVPVSEFNREEWDTPNKIVAKVESLENE.

Positions 1–77 (MDTKQGVLDI…KIVAKVESLE (77 aa)) constitute a Carrier domain. Ser-35 is subject to O-(pantetheine 4'-phosphoryl)serine.

The protein belongs to the DltC family. In terms of processing, 4'-phosphopantetheine is transferred from CoA to a specific serine of apo-DCP.

The protein localises to the cytoplasm. It participates in cell wall biogenesis; lipoteichoic acid biosynthesis. Its function is as follows. Carrier protein involved in the D-alanylation of lipoteichoic acid (LTA). The loading of thioester-linked D-alanine onto DltC is catalyzed by D-alanine--D-alanyl carrier protein ligase DltA. The DltC-carried D-alanyl group is further transferred to cell membrane phosphatidylglycerol (PG) by forming an ester bond, probably catalyzed by DltD. D-alanylation of LTA plays an important role in modulating the properties of the cell wall in Gram-positive bacteria, influencing the net charge of the cell wall. The polypeptide is D-alanyl carrier protein (Lactobacillus acidophilus (strain ATCC 700396 / NCK56 / N2 / NCFM)).